Reading from the N-terminus, the 587-residue chain is Kelch-like ECH-associated protein 1B (587 aa).

The BTB domain maps to 44–117 (CDVTLRVRYC…AYTASISVGE (74 aa)). In terms of domain architecture, BACK spans 153–253 (IGIASFAEQI…LTPHFLQRQL (101 aa)). Kelch repeat units follow at residues 292–337 (LIYT…VISG), 338–388 (LLYA…VIDG), 389–435 (MIYA…VINR), 436–482 (LLYA…ALGN), 484–529 (IYVM…THHG), and 530–576 (RIYV…VTME).

It belongs to the KEAP1 family. As to quaternary structure, homodimer and heterodimer; heterodimerizes with keap1a. Component of the BCR(KEAP1) E3 ubiquitin ligase complex, at least composed of 2 molecules of cul3, 2 molecules of keap1 (keap1a and/or keap1b), and rbx1. Interacts with nfe2l2/nrf2; the interaction is direct. Non-enzymatic covalent modifications of reactive cysteines by electrophile metabolites inactivate the BCR(KEAP1) complex. In terms of tissue distribution, widely expressed.

Its subcellular location is the cytoplasm. It is found in the nucleus. It functions in the pathway protein modification; protein ubiquitination. Its activity is regulated as follows. Ubiquitin ligase activity of the BCR(KEAP1) complex is inhibited by oxidative stress and electrophile metabolites such as sulforaphane. Electrophile metabolites react with reactive cysteine residues in keap1 and trigger non-enzymatic covalent modifications of these cysteine residues, leading to inactivate the ubiquitin ligase activity of the BCR(KEAP1) complex. Functionally, substrate-specific adapter of a BCR (BTB-CUL3-RBX1) E3 ubiquitin ligase complex that regulates the response to oxidative stress by targeting nfe2l2/nrf2 for ubiquitination. Keap1 acts as a key sensor of oxidative and electrophilic stress: in normal conditions, the BCR(KEAP1) complex mediates ubiquitination and degradation of nfe2l2/nrf2, a transcription factor regulating expression of many cytoprotective genes. In response to oxidative stress, different electrophile metabolites trigger non-enzymatic covalent modifications of highly reactive cysteine residues in KEAP1, leading to inactivate the ubiquitin ligase activity of the BCR(KEAP1) complex, promoting nfe2l2/nrf2 nuclear accumulation and expression of phase II detoxifying enzymes. The polypeptide is Kelch-like ECH-associated protein 1B (Danio rerio (Zebrafish)).